The sequence spans 489 residues: GTPase Der (489 aa).

EngA-type G domains follow at residues 3–166 (PVVA…AEAM) and 200–373 (IKLA…ESAT). Residues 9–16 (GRPNVGKS), 56–60 (DTGGI), 118–121 (NKVD), 206–213 (GKPNVGKS), 253–257 (DTAGV), and 318–321 (NKWD) each bind GTP. One can recognise a KH-like domain in the interval 374 to 458 (RRVSTSMLTR…PIQVRFQEGG (85 aa)).

The protein belongs to the TRAFAC class TrmE-Era-EngA-EngB-Septin-like GTPase superfamily. EngA (Der) GTPase family. In terms of assembly, associates with the 50S ribosomal subunit.

GTPase that plays an essential role in the late steps of ribosome biogenesis. The polypeptide is GTPase Der (Shewanella loihica (strain ATCC BAA-1088 / PV-4)).